A 293-amino-acid chain; its full sequence is Elongation factor Ts (293 aa).

The involved in Mg(2+) ion dislocation from EF-Tu stretch occupies residues 80-83 (TDFV).

This sequence belongs to the EF-Ts family.

The protein localises to the cytoplasm. Associates with the EF-Tu.GDP complex and induces the exchange of GDP to GTP. It remains bound to the aminoacyl-tRNA.EF-Tu.GTP complex up to the GTP hydrolysis stage on the ribosome. In Paraburkholderia phymatum (strain DSM 17167 / CIP 108236 / LMG 21445 / STM815) (Burkholderia phymatum), this protein is Elongation factor Ts.